The primary structure comprises 525 residues: MGWLFLKVLLVGMAFSGFFYPLVDFSISGKTRAPQPNIVIILADDMGWGDLGANWAETKDTTNLDKMASEGMRFVDFHAAASTCSPSRASLLTGRLGLRNGVTHNFAVTSVGGLPVNETTLAEVLRQEGYVTAMIGKWHLGHHGSYHPNFRGFDYYFGIPYSNDMGCTDAPGYNYPPCPACPQRDGLWRNPGRDCYTDVALPLYENLNIVEQPVNLSGLAQKYAERAVEFIEQASTSGRPFLLYVGLAHMHVPLSVTPPLAHPQRQSLYRASLREMDSLVGQIKDKVDHVARENTLLWFTGDNGPWAQKCELAGSVGPFFGLWQTHQGGSPTKQTTWEGGHRVPALAYWPGRVPANVTSTALLSLLDIFPTVIALAGASLPPNRKFDGRDVSEVLFGKSQMGHRVLFHPNSGAAGEYGALQTVRLNHYKAFYITGGAKACDGSVGPEQHHVAPLIFNLEDAADEGMPLQKGSPEYQEVLQQVTRALADVLQDIADDNSSRADYTQDPSVIPCCNPYQTTCRCQPV.

Residues 1 to 16 (MGWLFLKVLLVGMAFS) form the signal peptide. Ca(2+) is bound by residues Asp-44, Asp-45, and Cys-84. Cys-84 serves as the catalytic Nucleophile. Cys-84 bears the 3-oxoalanine (Cys) mark. A glycan (N-linked (GlcNAc...) asparagine) is linked at Asn-117. Lys-137 provides a ligand contact to substrate. Residue His-139 is part of the active site. Ser-162 contacts substrate. Residue Asn-215 is glycosylated (N-linked (GlcNAc...) asparagine). His-251 is a binding site for substrate. Asp-302 and Asn-303 together coordinate Ca(2+). Residues Asn-356 and Asn-497 are each glycosylated (N-linked (GlcNAc...) asparagine).

The protein belongs to the sulfatase family. Ca(2+) is required as a cofactor. Post-translationally, N-glycosylated with both high mannose and complex type sugars. The conversion to 3-oxoalanine (also known as C-formylglycine, FGly), of a serine or cysteine residue in prokaryotes and of a cysteine residue in eukaryotes, is critical for catalytic activity. In terms of processing, the 63-kDa precursor undergoes proteolytic processing in two steps, yielding two fragments in the first step (apparent molecular masses of 44 and 18 kDa). In the second step, the 44-kDa fragment is processed further to the 34- and 10-kDa chains. The 10-kDa chain is a cleavage product of the 44-kDa fragment but linked to the 18-kDa chain through a disulfide bridge. As to expression, highly expressed in the spleen, kidney, liver, brain, and testis (at protein level).

Its subcellular location is the lysosome. The enzyme catalyses an aryl sulfate + H2O = a phenol + sulfate + H(+). It carries out the reaction Hydrolysis of the 3-sulfate groups of the N-sulfo-D-glucosamine 3-O-sulfate units of heparin.. In terms of biological role, displays arylsulfatase activity at acidic pH towards the artificial substrate p-nitrocatechol sulfate. Catalyzes the hydrolysis of the 3-sulfate groups of the N-sulfo-D-glucosamine 3-O-sulfate units of heparin. This Mus musculus (Mouse) protein is Arylsulfatase G (Arsg).